The chain runs to 454 residues: tRNA modification GTPase MnmE (454 aa).

Positions 23, 80, and 120 each coordinate (6S)-5-formyl-5,6,7,8-tetrahydrofolate. The region spanning 216-377 is the TrmE-type G domain; it reads GMKVVIAGRP…LRDHLKQSMG (162 aa). Residue asparagine 226 coordinates K(+). Residues 226–231, 245–251, 270–273, 335–338, and 358–360 each bind GTP; these read NAGKSS, TDIAGTT, DTAG, NKAD, and SAR. Serine 230 contacts Mg(2+). The K(+) site is built by threonine 245, isoleucine 247, and threonine 250. Threonine 251 is a Mg(2+) binding site. Lysine 454 lines the (6S)-5-formyl-5,6,7,8-tetrahydrofolate pocket.

This sequence belongs to the TRAFAC class TrmE-Era-EngA-EngB-Septin-like GTPase superfamily. TrmE GTPase family. Homodimer. Heterotetramer of two MnmE and two MnmG subunits. It depends on K(+) as a cofactor.

It localises to the cytoplasm. Its function is as follows. Exhibits a very high intrinsic GTPase hydrolysis rate. Involved in the addition of a carboxymethylaminomethyl (cmnm) group at the wobble position (U34) of certain tRNAs, forming tRNA-cmnm(5)s(2)U34. The sequence is that of tRNA modification GTPase MnmE from Serratia proteamaculans (strain 568).